We begin with the raw amino-acid sequence, 245 residues long: tRNA pseudouridine synthase A (245 aa).

Aspartate 52 (nucleophile) is an active-site residue. Tyrosine 111 serves as a coordination point for substrate.

Belongs to the tRNA pseudouridine synthase TruA family. In terms of assembly, homodimer.

It carries out the reaction uridine(38/39/40) in tRNA = pseudouridine(38/39/40) in tRNA. Functionally, formation of pseudouridine at positions 38, 39 and 40 in the anticodon stem and loop of transfer RNAs. This chain is tRNA pseudouridine synthase A, found in Thermotoga neapolitana (strain ATCC 49049 / DSM 4359 / NBRC 107923 / NS-E).